Here is a 747-residue protein sequence, read N- to C-terminus: Eukaryotic translation initiation factor 3 subunit B (747 aa).

Residues 42–128 (AFVVVDGLPE…HTLRVNKLTD (87 aa)) enclose the RRM domain. WD repeat units follow at residues 195–234 (DRQH…RQRR), 236–292 (AHPF…PLRS), 310–349 (APKF…LLDK), 520–563 (LEKK…EKPE), and 578–623 (ADHY…LREE).

It belongs to the eIF-3 subunit B family. In terms of assembly, component of the eukaryotic translation initiation factor 3 (eIF-3) complex.

The protein resides in the cytoplasm. Functionally, RNA-binding component of the eukaryotic translation initiation factor 3 (eIF-3) complex, which is involved in protein synthesis of a specialized repertoire of mRNAs and, together with other initiation factors, stimulates binding of mRNA and methionyl-tRNAi to the 40S ribosome. The eIF-3 complex specifically targets and initiates translation of a subset of mRNAs involved in cell proliferation. The protein is Eukaryotic translation initiation factor 3 subunit B (prt-1) of Neurospora crassa (strain ATCC 24698 / 74-OR23-1A / CBS 708.71 / DSM 1257 / FGSC 987).